Here is a 127-residue protein sequence, read N- to C-terminus: Methylglyoxal synthase (127 aa).

The MGS-like domain maps to 1 to 127; it reads MEKKIALIAH…IKGLESLILR (127 aa). Substrate is bound by residues H10, K14, 36–39, and 56–57; these read TGTT and SG. The active-site Proton donor/acceptor is the D62. H89 is a substrate binding site.

It belongs to the methylglyoxal synthase family.

It carries out the reaction dihydroxyacetone phosphate = methylglyoxal + phosphate. Its function is as follows. Catalyzes the formation of methylglyoxal from dihydroxyacetone phosphate. The protein is Methylglyoxal synthase of Borreliella afzelii (strain PKo) (Borrelia afzelii).